The following is a 191-amino-acid chain: Protein RER1A (191 aa).

M1 carries the N-acetylmethionine modification. The next 4 helical transmembrane spans lie at 39 to 57, 60 to 80, 115 to 135, and 136 to 156; these read YRWI…RVYY, GFYI…IGFL, FKFW…TFFS, and VFDV…LFVL.

It belongs to the RER1 family.

It is found in the membrane. Its function is as follows. Involved in the retrieval of endoplasmic reticulum membrane proteins from the early Golgi compartment. In Arabidopsis thaliana (Mouse-ear cress), this protein is Protein RER1A (RER1A).